We begin with the raw amino-acid sequence, 312 residues long: Protein phosphatase PTC7 homolog fig (312 aa).

One can recognise a PPM-type phosphatase domain in the interval 42–306 (IQGSSKDQLA…DDITVILASV (265 aa)). The Mn(2+) site is built by Asp83, Gly84, and Asp228.

This sequence belongs to the PP2C family. Mg(2+) serves as cofactor. Requires Mn(2+) as cofactor.

It carries out the reaction O-phospho-L-seryl-[protein] + H2O = L-seryl-[protein] + phosphate. The catalysed reaction is O-phospho-L-threonyl-[protein] + H2O = L-threonyl-[protein] + phosphate. The chain is Protein phosphatase PTC7 homolog fig from Drosophila mojavensis (Fruit fly).